Here is a 263-residue protein sequence, read N- to C-terminus: Nitrogenase iron protein 2 (263 aa).

Residue G9–S16 participates in ATP binding. [4Fe-4S] cluster is bound at residue C92. R95 carries the ADP-ribosylarginine; by dinitrogenase reductase ADP-ribosyltransferase modification. C127 is a [4Fe-4S] cluster binding site.

This sequence belongs to the NifH/BchL/ChlL family. As to quaternary structure, homodimer. [4Fe-4S] cluster serves as cofactor. In terms of processing, the reversible ADP-ribosylation of Arg-95 inactivates the nitrogenase reductase and regulates nitrogenase activity.

The catalysed reaction is N2 + 8 reduced [2Fe-2S]-[ferredoxin] + 16 ATP + 16 H2O = H2 + 8 oxidized [2Fe-2S]-[ferredoxin] + 2 NH4(+) + 16 ADP + 16 phosphate + 6 H(+). The key enzymatic reactions in nitrogen fixation are catalyzed by the nitrogenase complex, which has 2 components: the iron protein and the molybdenum-iron protein. This chain is Nitrogenase iron protein 2 (nifH2), found in Methanobacterium ivanovii.